The primary structure comprises 254 residues: Phosphatidylglycerol--prolipoprotein diacylglyceryl transferase (254 aa).

4 helical membrane-spanning segments follow: residues 11–31 (LAIRWYGVVISIGAALGLLLA), 49–69 (FLIAFPSAIIGARLYYVIFEF), 84–104 (QGGLAIHGGIIFGVLAVYIYL), and 109–129 (ESFFEYVDVAAPSIILGQAIG). Residue Arg-130 coordinates a 1,2-diacyl-sn-glycero-3-phospho-(1'-sn-glycerol). A run of 3 helical transmembrane segments spans residues 169-189 (PTFLYESIWNFIVCIFLVYLL), 196-216 (GIVFMAYIGLYSLGRFFIEGL), and 228-248 (VAQLISVLGIILSIFFIYNII).

This sequence belongs to the Lgt family.

The protein resides in the cell membrane. It carries out the reaction L-cysteinyl-[prolipoprotein] + a 1,2-diacyl-sn-glycero-3-phospho-(1'-sn-glycerol) = an S-1,2-diacyl-sn-glyceryl-L-cysteinyl-[prolipoprotein] + sn-glycerol 1-phosphate + H(+). The protein operates within protein modification; lipoprotein biosynthesis (diacylglyceryl transfer). In terms of biological role, catalyzes the transfer of the diacylglyceryl group from phosphatidylglycerol to the sulfhydryl group of the N-terminal cysteine of a prolipoprotein, the first step in the formation of mature lipoproteins. This is Phosphatidylglycerol--prolipoprotein diacylglyceryl transferase from Clostridium botulinum (strain Langeland / NCTC 10281 / Type F).